Reading from the N-terminus, the 192-residue chain is Signal peptidase complex catalytic subunit SEC11C (192 aa).

The Cytoplasmic portion of the chain corresponds to 1–28; sequence MVRAGAVGAHLPASGLDIFGDLKKMNKR. The helical; Signal-anchor for type II membrane protein transmembrane segment at 29–48 threads the bilayer; sequence QLYYQVLNFAMIVSSALMIW. The Lumenal portion of the chain corresponds to 49–192; sequence KGLIVLTGSE…GAYVLLKRES (144 aa). Residues Ser-68, His-108, and Asp-134 each act as charge relay system in the active site. The segment at 177–188 is C-terminal short (CTS) helix; that stretch reads ALLAVMGAYVLL.

It belongs to the peptidase S26B family. Component of the signal peptidase complex paralog C (SPC-C) composed of a catalytic subunit SEC11C and three accessory subunits SPCS1, SPCS2 and SPCS3. Within the complex, interacts with SPCS2 and SPCS3. The complex induces a local thinning of the ER membrane which is used to measure the length of the signal peptide (SP) h-region of protein substrates. This ensures the selectivity of the complex towards h-regions shorter than 18-20 amino acids. In terms of processing, may undergo processing at the N-terminus.

It is found in the endoplasmic reticulum membrane. The enzyme catalyses Cleavage of hydrophobic, N-terminal signal or leader sequences from secreted and periplasmic proteins.. In terms of biological role, catalytic component of the signal peptidase complex (SPC) which catalyzes the cleavage of N-terminal signal sequences from nascent proteins as they are translocated into the lumen of the endoplasmic reticulum. Specifically cleaves N-terminal signal peptides that contain a hydrophobic alpha-helix (h-region) shorter than 18-20 amino acids. The protein is Signal peptidase complex catalytic subunit SEC11C (SEC11C) of Homo sapiens (Human).